Reading from the N-terminus, the 306-residue chain is tRNA dimethylallyltransferase 2 (306 aa).

11-18 (GPTASGKT) contacts ATP. 13–18 (TASGKT) provides a ligand contact to substrate. Positions 36 to 39 (DSRQ) are interaction with substrate tRNA.

Belongs to the IPP transferase family. Monomer. It depends on Mg(2+) as a cofactor.

The catalysed reaction is adenosine(37) in tRNA + dimethylallyl diphosphate = N(6)-dimethylallyladenosine(37) in tRNA + diphosphate. Functionally, catalyzes the transfer of a dimethylallyl group onto the adenine at position 37 in tRNAs that read codons beginning with uridine, leading to the formation of N6-(dimethylallyl)adenosine (i(6)A). The chain is tRNA dimethylallyltransferase 2 from Bacteroides thetaiotaomicron (strain ATCC 29148 / DSM 2079 / JCM 5827 / CCUG 10774 / NCTC 10582 / VPI-5482 / E50).